Here is a 316-residue protein sequence, read N- to C-terminus: GPI-specific phospholipase A2-like PGAP3 (316 aa).

The first 18 residues, 1–18 (MAPFLVLFLAGVVAASRG), serve as a signal peptide directing secretion. Over 19-93 (DREPVYRDCV…QFHGKWPFSR (75 aa)) the chain is Lumenal. Asparagine 35 is a glycosylation site (N-linked (GlcNAc...) asparagine). Residues 94-114 (FLFFQEPASALASFLNGVASL) form a helical membrane-spanning segment. Over 115–132 (LMLLRYRSSVPSSCQMYR) the chain is Cytoplasmic. Residues 133–153 (TCLAFSMVSVNAWFWSTIFHT) form a helical membrane-spanning segment. Over 154-163 (RDTALTEKMD) the chain is Lumenal. The helical transmembrane segment at 164–180 (YFCASSVILHSIYLCCM) threads the bilayer. At 181 to 182 (RT) the chain is on the cytoplasmic side. Residues 183-203 (FGLQYPSIANGFGAFLVLLFA) form a helical membrane-spanning segment. The Lumenal portion of the chain corresponds to 204–218 (CHVSYLTLGRFDYSY). The helical transmembrane segment at 219–239 (NMAANTGFGVLNLMWWLAWCF) threads the bilayer. The Cytoplasmic portion of the chain corresponds to 240 to 251 (RRRFHQPYLWKC). Residues 252–272 (VLVVISLQSLALLELLDFPPV) form a helical membrane-spanning segment. Residue methionine 273 is a topological domain, lumenal. The chain crosses the membrane as a helical span at residues 274–293 (WILDAHALWHFSTVPLHFLF). The Cytoplasmic segment spans residues 294–316 (YSFLKDDSLYLLKINHDDIPKLD).

It belongs to the PGAP3 family.

The protein localises to the golgi apparatus membrane. Its function is as follows. Involved in the fatty acid remodeling steps of GPI-anchor maturation where the unsaturated acyl chain at sn-2 of inositol phosphate is replaced by a saturated stearoyl chain. May catalyze the first step of the fatty acid remodeling, by removing the unsaturated acyl chain at sn-2 of inositol phosphate, generating a lyso-GPI intermediate. The fatty acid remodeling steps is critical for the integration of GPI-APs into lipid rafts. This is GPI-specific phospholipase A2-like PGAP3 from Xenopus tropicalis (Western clawed frog).